The following is a 285-amino-acid chain: Bifunctional protein FolD (285 aa).

Residues 166-168 (GAS) and isoleucine 232 each bind NADP(+).

Belongs to the tetrahydrofolate dehydrogenase/cyclohydrolase family. In terms of assembly, homodimer.

The catalysed reaction is (6R)-5,10-methylene-5,6,7,8-tetrahydrofolate + NADP(+) = (6R)-5,10-methenyltetrahydrofolate + NADPH. It carries out the reaction (6R)-5,10-methenyltetrahydrofolate + H2O = (6R)-10-formyltetrahydrofolate + H(+). Its pathway is one-carbon metabolism; tetrahydrofolate interconversion. Its function is as follows. Catalyzes the oxidation of 5,10-methylenetetrahydrofolate to 5,10-methenyltetrahydrofolate and then the hydrolysis of 5,10-methenyltetrahydrofolate to 10-formyltetrahydrofolate. In Pseudoalteromonas atlantica (strain T6c / ATCC BAA-1087), this protein is Bifunctional protein FolD.